We begin with the raw amino-acid sequence, 44 residues long: Thioredoxin (44 aa).

One can recognise a Thioredoxin domain in the interval isoleucine 2–glutamate 44. Residues cysteine 29 and cysteine 32 are joined by a disulfide bond.

It belongs to the thioredoxin family.

Participates in various redox reactions through the reversible oxidation of its active center dithiol to a disulfide and catalyzes dithiol-disulfide exchange reactions. The protein is Thioredoxin (trxA) of Tissierella creatinophila.